The primary structure comprises 206 residues: Testis-expressed protein 38 (206 aa).

A helical membrane pass occupies residues 15–35 (VSLYFGILGLCSVITGGCIIF).

It is found in the membrane. In Homo sapiens (Human), this protein is Testis-expressed protein 38 (TEX38).